A 369-amino-acid chain; its full sequence is Phospho-N-acetylmuramoyl-pentapeptide-transferase (369 aa).

Transmembrane regions (helical) follow at residues 3–23, 53–73, 81–101, 118–138, 162–182, 198–218, 240–260, 267–287, 290–310, and 347–367; these read ALLFAGAFSLAFTLFLTPLFI, GGIVIILASVLGYFVGHLLTW, VTPSGLLVVFMMVGLGFVGFL, WQKIAGQVVVATVFAVLAITL, FMALGAVIGTGLFIVWICLIV, LAAGASIFSIGSYVIIGFWQF, PLDLAIIAASIVGALIGFLWW, IFMGDTGSLGLGGALAALAIL, TELLLVFIGGLFVIVAGSVVL, and FWIIAGLLVAAGVGTFYLEWI.

Belongs to the glycosyltransferase 4 family. MraY subfamily. The cofactor is Mg(2+).

The protein localises to the cell membrane. The enzyme catalyses UDP-N-acetyl-alpha-D-muramoyl-L-alanyl-gamma-D-glutamyl-meso-2,6-diaminopimeloyl-D-alanyl-D-alanine + di-trans,octa-cis-undecaprenyl phosphate = di-trans,octa-cis-undecaprenyl diphospho-N-acetyl-alpha-D-muramoyl-L-alanyl-D-glutamyl-meso-2,6-diaminopimeloyl-D-alanyl-D-alanine + UMP. The protein operates within cell wall biogenesis; peptidoglycan biosynthesis. Its function is as follows. Catalyzes the initial step of the lipid cycle reactions in the biosynthesis of the cell wall peptidoglycan: transfers peptidoglycan precursor phospho-MurNAc-pentapeptide from UDP-MurNAc-pentapeptide onto the lipid carrier undecaprenyl phosphate, yielding undecaprenyl-pyrophosphoryl-MurNAc-pentapeptide, known as lipid I. In Clavibacter michiganensis subsp. michiganensis (strain NCPPB 382), this protein is Phospho-N-acetylmuramoyl-pentapeptide-transferase.